Here is a 151-residue protein sequence, read N- to C-terminus: Zinc finger HIT domain-containing protein 3 (151 aa).

Residues Cys-11, Cys-14, Cys-22, Cys-25, Cys-30, Cys-34, His-38, and Cys-42 each contribute to the Zn(2+) site. The segment at Cys-11–Cys-42 adopts an HIT-type zinc-finger fold. Residues Ser-43 to Arg-53 are compositionally biased toward basic and acidic residues. Positions Ser-43–Asp-81 are disordered. Positions Ser-63–Asp-81 are enriched in acidic residues. Residue Ser-76 is modified to Phosphoserine.

As to quaternary structure, thyroid receptor interacting proteins (TRIPs) specifically interact with the ligand binding domain of the thyroid receptor (TR). Requires the presence of thyroid hormone for its interaction. Interacts with NUFIP1. Interacts (via HIT-type zinc finger) with the RUVBL1/RUVBL2 complex in the presence of ADP. In terms of tissue distribution, expressed in the cerebellum.

The protein localises to the cytoplasm. Its subcellular location is the nucleus. This is Zinc finger HIT domain-containing protein 3 (Znhit3) from Mus musculus (Mouse).